Reading from the N-terminus, the 211-residue chain is SsrA-binding protein (211 aa).

Positions 168-211 (KHRLRRPRAQRNTQRSVTPRRTRENKNVRGSKARSARRNVRREN) are disordered. Polar residues predominate over residues 177–186 (QRNTQRSVTP). A compositionally biased stretch (basic residues) spans 196 to 211 (RGSKARSARRNVRREN).

The protein belongs to the SmpB family.

Its subcellular location is the cytoplasm. Required for rescue of stalled ribosomes mediated by trans-translation. Binds to transfer-messenger RNA (tmRNA), required for stable association of tmRNA with ribosomes. tmRNA and SmpB together mimic tRNA shape, replacing the anticodon stem-loop with SmpB. tmRNA is encoded by the ssrA gene; the 2 termini fold to resemble tRNA(Ala) and it encodes a 'tag peptide', a short internal open reading frame. During trans-translation Ala-aminoacylated tmRNA acts like a tRNA, entering the A-site of stalled ribosomes, displacing the stalled mRNA. The ribosome then switches to translate the ORF on the tmRNA; the nascent peptide is terminated with the 'tag peptide' encoded by the tmRNA and targeted for degradation. The ribosome is freed to recommence translation, which seems to be the essential function of trans-translation. The polypeptide is SsrA-binding protein (Tropheryma whipplei (strain Twist) (Whipple's bacillus)).